A 433-amino-acid polypeptide reads, in one-letter code: uncharacterized protein (433 aa).

The interval 1–126 is methylglyoxal synthase; it reads MAAHIALIAH…VIKLLGKTKT (126 aa). The region spanning 1–145 is the MGS-like domain; the sequence is MAAHIALIAH…GQGNVERELD (145 aa). Asp62 is an active-site residue. Positions 127 to 262 constitute a DAGKc domain; that stretch reads GHLIFNPVAG…VDTALCNDIP (136 aa).

It in the N-terminal section; belongs to the methylglyoxal synthase family.

This is an uncharacterized protein from Synechocystis sp. (strain ATCC 27184 / PCC 6803 / Kazusa).